Reading from the N-terminus, the 104-residue chain is uncharacterized protein (104 aa).

It localises to the mitochondrion. This is an uncharacterized protein from Claviceps purpurea (Ergot fungus).